A 396-amino-acid chain; its full sequence is MKVVLAYSGGLDTSAILVLLREQGHEVVTVTVSVGQEEDLEEVEERAYKLGASKHYTVNAVEEFAEKYISMAIKANALYEDKYPLGTALARPLIAEKVAEIARKESADAVAHGCTSKGNDQVRFDTMLKYYLGDDIKIIAPVRELRLTRAKAAEILRRNGFQPPGLHKTYSIDENLWSRSIEGGPLDDPMAEPPEDAFAWTVAPEKAPDQPLYLEIGFEKGIPVSINGEKMHLAKIVSLLNRLVGAYGYGRIDHIENRVVGLKSREVYEAPAALTLIEAHRDLEKTVYTPRELRFKRILDQEWSDLVYQGLWVEPLRATLEKAIDELNRWVTGTVRVKVYKGSLMVVGRWSPYSGYSREAIDYNHGWYPSDEEARGFITIWSLHSLAAAKARSLWG.

An ATP-binding site is contributed by 6–14; sequence AYSGGLDTS. Tyr-83 provides a ligand contact to L-citrulline. Gly-113 is an ATP binding site. Residues Thr-115, Asn-119, and Asp-120 each contribute to the L-aspartate site. Residue Asn-119 coordinates L-citrulline. L-citrulline contacts are provided by Arg-123, Ser-171, Ser-180, Glu-256, and Tyr-268.

This sequence belongs to the argininosuccinate synthase family. Type 1 subfamily. As to quaternary structure, homotetramer.

The protein localises to the cytoplasm. It carries out the reaction L-citrulline + L-aspartate + ATP = 2-(N(omega)-L-arginino)succinate + AMP + diphosphate + H(+). It participates in amino-acid biosynthesis; L-arginine biosynthesis; L-arginine from L-ornithine and carbamoyl phosphate: step 2/3. This Hyperthermus butylicus (strain DSM 5456 / JCM 9403 / PLM1-5) protein is Argininosuccinate synthase.